The primary structure comprises 567 residues: 2-isopropylmalate synthase (567 aa).

The Pyruvate carboxyltransferase domain maps to 28–302 (PQWCSVDLRD…NPELDFSDIN (275 aa)). Residues Asp-37, His-241, His-243, and Asn-277 each coordinate Mg(2+). A regulatory domain region spans residues 435 to 567 (IRTPLQLNYH…DMDTQEEDIA (133 aa)).

The protein belongs to the alpha-IPM synthase/homocitrate synthase family. LeuA type 2 subfamily. As to quaternary structure, homodimer. Mg(2+) serves as cofactor.

It localises to the cytoplasm. The enzyme catalyses 3-methyl-2-oxobutanoate + acetyl-CoA + H2O = (2S)-2-isopropylmalate + CoA + H(+). It participates in amino-acid biosynthesis; L-leucine biosynthesis; L-leucine from 3-methyl-2-oxobutanoate: step 1/4. Functionally, catalyzes the condensation of the acetyl group of acetyl-CoA with 3-methyl-2-oxobutanoate (2-ketoisovalerate) to form 3-carboxy-3-hydroxy-4-methylpentanoate (2-isopropylmalate). This is 2-isopropylmalate synthase from Acetoanaerobium sticklandii (strain ATCC 12662 / DSM 519 / JCM 1433 / CCUG 9281 / NCIMB 10654 / HF) (Clostridium sticklandii).